We begin with the raw amino-acid sequence, 259 residues long: Small ribosomal subunit protein uS2 (259 aa).

The protein belongs to the universal ribosomal protein uS2 family.

In Dinoroseobacter shibae (strain DSM 16493 / NCIMB 14021 / DFL 12), this protein is Small ribosomal subunit protein uS2.